We begin with the raw amino-acid sequence, 940 residues long: Serine/threonine-protein phosphatase 1 regulatory subunit 10 (940 aa).

The interaction with TOX4 stretch occupies residues 1-348 (MGSGPIDPKE…EPAPPSEAMD (348 aa)). The region spanning 73-147 (KLLNNWLTYS…SDWMAVIRSQ (75 aa)) is the TFIIS N-terminal domain. Disordered stretches follow at residues 147 to 211 (QSST…FRST), 247 to 270 (SNVA…NTTP), 304 to 400 (KIKK…KSVT), and 533 to 905 (YVET…HGGD). 2 stretches are compositionally biased toward basic and acidic residues: residues 153–166 (AEKD…EGKS) and 174–196 (PLTE…EKPK). Residue Lys179 forms a Glycyl lysine isopeptide (Lys-Gly) (interchain with G-Cter in SUMO2) linkage. Thr256 carries the phosphothreonine modification. Residue Lys262 forms a Glycyl lysine isopeptide (Lys-Gly) (interchain with G-Cter in SUMO2) linkage. Ser313 bears the Phosphoserine mark. Positions 325-336 (KTSTEPSTAKPS) are enriched in low complexity. Residues 357–433 (PPVEVPELMD…NKIKDFGEAA (77 aa)) form a necessary for interaction with PPP1CA region. At Ser382 the chain carries Phosphoserine. A necessary for interaction with PPP1CC region spans residues 393–408 (GRKRKSVTWPEEGKLR). The short motif at 394 to 423 (RKRKSVTWPEEGKLREYFYFELDETERVNV) is the PP1-binding motif element. Ser398 is modified (phosphoserine; by PKA). The interaction with WDR82 stretch occupies residues 418–619 (TERVNVNKIK…IKQMLVPHGL (202 aa)). 2 stretches are compositionally biased toward gly residues: residues 540-551 (GGSGGSPDGAGG) and 565-579 (MGAG…GGGI). Position 545 is a phosphoserine (Ser545). Positions 583-595 (EILTSIMGSPNSH) are enriched in polar residues. Phosphoserine is present on Ser591. Over residues 596–611 (PSEELLKQPDYSDKIK) the composition is skewed to basic and acidic residues. The span at 644–655 (PPGPGGPMPGPH) shows a compositional bias: pro residues. Arg665 bears the Omega-N-methylarginine mark. Over residues 676-690 (GDPFWDGPGDPMRGG) the composition is skewed to low complexity. Arg693 is subject to Omega-N-methylarginine. Residues 714 to 723 (EPPPPPPPPF) are compositionally biased toward pro residues. 2 stretches are compositionally biased toward gly residues: residues 726-764 (ARGG…GMGN) and 790-845 (SSMG…GSGG). The residue at position 739 (Arg739) is an Omega-N-methylarginine. 2 stretches are compositionally biased toward basic and acidic residues: residues 862–886 (PHDV…HDGP) and 894–903 (RGHDGGHSHG). The segment at 906–934 (MSNRPVCRHFMMKGNCRYENNCAFYHPGV) adopts a C3H1-type zinc-finger fold.

As to quaternary structure, component of the PNUTS-PP1 complex (also named PTW/PP1 complex), composed of PPP1R10/PNUTS, TOX4, WDR82, and PPP1CA (or PPP1CB or PPP1CC). In terms of processing, phosphorylated on Ser-398 by PKA within the region necessary for interaction with PPP1CA.

It localises to the nucleus. Its subcellular location is the chromosome. In terms of biological role, substrate-recognition component of the PNUTS-PP1 protein phosphatase complex, a protein phosphatase 1 (PP1) complex that promotes RNA polymerase II transcription pause-release, allowing transcription elongation. Promoter-proximal pausing by RNA polymerase II is a transcription halt following transcription initiation but prior to elongation, which acts as a checkpoint to control that transcripts are favorably configured for transcriptional elongation. The PNUTS-PP1 complex mediates the release of RNA polymerase II from promoter-proximal region of genes by catalyzing dephosphorylation of proteins involved in transcription, such as AFF4, CDK9, MEPCE, INTS12, NCBP1, POLR2M/GDOWN1 and SUPT6H. The PNUTS-PP1 complex also regulates RNA polymerase II transcription termination by mediating dephosphorylation of SUPT5H in termination zones downstream of poly(A) sites, thereby promoting deceleration of RNA polymerase II transcription. PNUTS-PP1 complex is also involved in the response to replication stress by mediating dephosphorylation of POLR2A at 'Ser-5' of the CTD, promoting RNA polymerase II degradation. The PNUTS-PP1 complex also plays a role in the control of chromatin structure and cell cycle progression during the transition from mitosis into interphase. PNUTS-PP1 complex mediates dephosphorylation of MYC, promoting MYC stability by preventing MYC ubiquitination by the SCF(FBXW7) complex. In addition to acts as a substrate-recognition component, PPP1R10/PNUTS also acts as a nuclear targeting subunit for the PNUTS-PP1 complex. In some context, PPP1R10/PNUTS also acts as an inhibitor of protein phosphatase 1 (PP1) activity by preventing access to substrates, such as RB. This chain is Serine/threonine-protein phosphatase 1 regulatory subunit 10 (PPP1R10), found in Macaca mulatta (Rhesus macaque).